The primary structure comprises 103 residues: Large ribosomal subunit protein uL24 (103 aa).

It belongs to the universal ribosomal protein uL24 family. In terms of assembly, part of the 50S ribosomal subunit.

One of two assembly initiator proteins, it binds directly to the 5'-end of the 23S rRNA, where it nucleates assembly of the 50S subunit. Functionally, one of the proteins that surrounds the polypeptide exit tunnel on the outside of the subunit. This is Large ribosomal subunit protein uL24 from Listeria monocytogenes serotype 4a (strain HCC23).